Here is a 22-residue protein sequence, read N- to C-terminus: Unknown protein 20 from 2D-PAGE (22 aa).

The polypeptide is Unknown protein 20 from 2D-PAGE (Bombyx mori (Silk moth)).